We begin with the raw amino-acid sequence, 162 residues long: Peptide methionine sulfoxide reductase MsrA (162 aa).

Cys16 is a catalytic residue.

The protein belongs to the MsrA Met sulfoxide reductase family.

The enzyme catalyses L-methionyl-[protein] + [thioredoxin]-disulfide + H2O = L-methionyl-(S)-S-oxide-[protein] + [thioredoxin]-dithiol. It catalyses the reaction [thioredoxin]-disulfide + L-methionine + H2O = L-methionine (S)-S-oxide + [thioredoxin]-dithiol. Functionally, has an important function as a repair enzyme for proteins that have been inactivated by oxidation. Catalyzes the reversible oxidation-reduction of methionine sulfoxide in proteins to methionine. The chain is Peptide methionine sulfoxide reductase MsrA from Geobacter sulfurreducens (strain ATCC 51573 / DSM 12127 / PCA).